The primary structure comprises 479 residues: Catalase A (479 aa).

His-63 is an active-site residue. Tyr-346 serves as a coordination point for heme.

It belongs to the catalase family. It depends on heme as a cofactor.

The protein localises to the peroxisome matrix. The catalysed reaction is 2 H2O2 = O2 + 2 H2O. Catalyzes the degradation of hydrogen peroxide (H(2)O(2)) generated by peroxisomal oxidases to water and oxygen, thereby protecting cells from the toxic effects of hydrogen peroxide. In Botryotinia fuckeliana (Noble rot fungus), this protein is Catalase A (catA).